The primary structure comprises 145 residues: Immunoglobulin iota chain (145 aa).

Residues 1-19 (MSWAPVLLMLFVYCTGCGP) form the signal peptide. The segment at 20–41 (QPVLHQPPAMSSALGTTIRLTC) is framework-1. In terms of domain architecture, Ig-like V-type spans 20–132 (QPVLHQPPAM…EKEEREREWE (113 aa)). A disulfide bridge links Cys41 with Cys115. Positions 42 to 56 (TLRNDHDIGVYSVYW) are complementarity-determining-1. A framework-2 region spans residues 57-70 (YQQRPGHPPRFLLR). The interval 71–81 (YFSQSDKSQGP) is complementarity-determining-2. Residues 82–115 (QVPPRFSGSKDVARNRGYLSISELQPEDEAMYYC) are framework-3. Positions 121 to 130 (SSEKEERERE) are enriched in basic and acidic residues. Residues 121-145 (SSEKEEREREWEEEMEPTAARTRVP) are disordered.

This sequence belongs to the immunoglobulin superfamily. Interacts with IGLL1. Interacts with SYNV1/HRD1 (via N-terminus); this interaction leads to increased VPREB1 ubiquitination and degradation in pre-B cells, possibly through a lysosomal, not proteasomal, pathway. In terms of tissue distribution, only expressed by pre-B-cells.

The protein resides in the endoplasmic reticulum. In terms of biological role, associates with the Ig-mu chain to form a molecular complex that is expressed on the surface of pre-B-cells. This complex presumably regulates Ig gene rearrangements in the early steps of B-cell differentiation. This Homo sapiens (Human) protein is Immunoglobulin iota chain (VPREB1).